The chain runs to 311 residues: Tricarboxylate transport protein, mitochondrial (311 aa).

Residues 1–13 constitute a propeptide, removed in mature form; that stretch reads MPAPRAPRALAAA. Solcar repeat units lie at residues 23–111, 122–208, and 218–303; these read THPG…LSNH, TRGL…LRNW, and MNPL…VVKL. A run of 3 helical transmembrane segments spans residues 29–46, 86–105, and 129–143; these read ILAGGLAGGIEICITFPT, GLSSLLYGSIPKAAVRFGMF, and LGAGVAEAVVVVCPM. Residue Ser156 is modified to Phosphoserine. The next 3 membrane-spanning stretches (helical) occupy residues 183-202, 224-241, and 278-297; these read GLTATVLKQGSNQAIRFFVM, GVFGAIAGAASVFGNTPL, and GTVPRLGRVCLDVAIVFVIY.

This sequence belongs to the mitochondrial carrier (TC 2.A.29) family. In terms of processing, possesses a short cleavable presequence, which, however, is found to be dispensable both for targeting to mitochondria and insertion into the inner membrane. However, the presequence is required to keep SLC25A1 in a soluble state and thus in an import-competent state. Mature SLC25A1 lacking the presequence is prone to aggregation.

It localises to the mitochondrion inner membrane. The catalysed reaction is (S)-malate(in) + citrate(out) = (S)-malate(out) + citrate(in). It carries out the reaction D-threo-isocitrate(in) + citrate(out) = D-threo-isocitrate(out) + citrate(in). The enzyme catalyses citrate(out) + succinate(in) = citrate(in) + succinate(out). It catalyses the reaction cis-aconitate(in) + citrate(out) = cis-aconitate(out) + citrate(in). The catalysed reaction is trans-aconitate(in) + citrate(out) = trans-aconitate(out) + citrate(in). It carries out the reaction phosphoenolpyruvate(in) + citrate(out) = phosphoenolpyruvate(out) + citrate(in). The enzyme catalyses maleate(in) + citrate(out) = maleate(out) + citrate(in). Functionally, mitochondrial electroneutral antiporter that exports citrate from the mitochondria into the cytosol in exchange for malate. Also able to mediate the exchange of citrate for isocitrate, phosphoenolpyruvate, cis-aconitate and to a lesser extent trans-aconitate, maleate and succinate. In the cytoplasm, citrate plays important roles in fatty acid and sterol synthesis, regulation of glycolysis, protein acetylation, and other physiopathological processes. The chain is Tricarboxylate transport protein, mitochondrial (SLC25A1) from Homo sapiens (Human).